The primary structure comprises 129 residues: Large ribosomal subunit protein bL19 (129 aa).

It belongs to the bacterial ribosomal protein bL19 family.

Functionally, this protein is located at the 30S-50S ribosomal subunit interface and may play a role in the structure and function of the aminoacyl-tRNA binding site. This Methylobacillus flagellatus (strain ATCC 51484 / DSM 6875 / VKM B-1610 / KT) protein is Large ribosomal subunit protein bL19.